Consider the following 360-residue polypeptide: DNA replication and repair protein RecF (360 aa).

Residue 33-40 (GENGSGKT) coordinates ATP.

The protein belongs to the RecF family.

The protein localises to the cytoplasm. In terms of biological role, the RecF protein is involved in DNA metabolism; it is required for DNA replication and normal SOS inducibility. RecF binds preferentially to single-stranded, linear DNA. It also seems to bind ATP. This is DNA replication and repair protein RecF from Rickettsia peacockii (strain Rustic).